A 239-amino-acid polypeptide reads, in one-letter code: MIAFTLLSLAAVLQQSFGNVDFNSESTRRQKKQKEIVDLHNSLRRSVSPTASNMLKMQWYPEAASNAERWASNCNLGHSPDYSRVLEGIECGENIYMSSNPRAWTEIIQLWHDEYKNFVYGVGANPPGSVTGHYTQIVWYKTYRIGCAVNYCPSSEYSYFYVCQYCPSGNMRGSTATPYKSGPTCGDCPSACDNGLCTNPCTLYNEYTNCDSLVKQSSCQDEWIKSKCPASCFCHNKII.

The signal sequence occupies residues 1-18 (MIAFTLLSLAAVLQQSFG). The SCP domain maps to 37 to 165 (VDLHNSLRRS…EYSYFYVCQY (129 aa)). 8 disulfide bridges follow: cysteine 74/cysteine 152, cysteine 91/cysteine 166, cysteine 147/cysteine 163, cysteine 185/cysteine 192, cysteine 188/cysteine 197, cysteine 201/cysteine 234, cysteine 210/cysteine 228, and cysteine 219/cysteine 232. A ShKT domain is found at 201-234 (CTLYNEYTNCDSLVKQSSCQDEWIKSKCPASCFC).

In terms of tissue distribution, expressed by the venom gland.

Its subcellular location is the secreted. Its function is as follows. Weakly blocks contraction of smooth muscle elicited by high potassium-induced depolarization, but does not block caffeine-stimulated contraction. May target voltage-gated calcium channels on smooth muscle. The chain is Cysteine-rich venom protein ophanin from Ophiophagus hannah (King cobra).